The following is a 95-amino-acid chain: uncharacterized protein (95 aa).

This is an uncharacterized protein from Autographa californica nuclear polyhedrosis virus (AcMNPV).